The chain runs to 333 residues: Protein translocase subunit SecF (333 aa).

6 helical membrane-spanning segments follow: residues 27–47 (AIVMMIASVILPLVIGLNFGI), 152–172 (VWTAVWSLLAATVVIMFYIWV), 180–200 (LGAVVALVHDVLLTVGLFAVL), 207–227 (TTVAALLTITGYSINDTVVVF), 253–275 (TLSRTVMTGMTTLLALVPMLIWG), and 285–307 (AMVWGVFTGTYSSVYVAKNIVLF).

Belongs to the SecD/SecF family. SecF subfamily. In terms of assembly, forms a complex with SecD. Part of the essential Sec protein translocation apparatus which comprises SecA, SecYEG and auxiliary proteins SecDF-YajC and YidC.

It localises to the cell inner membrane. Its function is as follows. Part of the Sec protein translocase complex. Interacts with the SecYEG preprotein conducting channel. SecDF uses the proton motive force (PMF) to complete protein translocation after the ATP-dependent function of SecA. This chain is Protein translocase subunit SecF, found in Rhodobacter capsulatus (strain ATCC BAA-309 / NBRC 16581 / SB1003).